A 518-amino-acid polypeptide reads, in one-letter code: Chromosomal replication initiator protein DnaA (518 aa).

The interval 1 to 72 (MNEFWQHCSA…DLARDFWHSP (72 aa)) is domain I, interacts with DnaA modulators. Positions 72 to 181 (PVDVQFVLDP…GESDSTYERS (110 aa)) are domain II. Positions 155–178 (AAARRTWRPGAAAQAAGGESDSTY) are disordered. The tract at residues 182-398 (KLNPVLTFDN…GALRKILAYS (217 aa)) is domain III, AAA+ region. Residues G226, G228, K229, and T230 each coordinate ATP. The domain IV, binds dsDNA stretch occupies residues 399–518 (KFHGREITIE…LHVLEQTLKG (120 aa)).

Belongs to the DnaA family. In terms of assembly, oligomerizes as a right-handed, spiral filament on DNA at oriC.

The protein resides in the cytoplasm. Plays an essential role in the initiation and regulation of chromosomal replication. ATP-DnaA binds to the origin of replication (oriC) to initiate formation of the DNA replication initiation complex once per cell cycle. Binds the DnaA box (a 9 base pair repeat at the origin) and separates the double-stranded (ds)DNA. Forms a right-handed helical filament on oriC DNA; dsDNA binds to the exterior of the filament while single-stranded (ss)DNA is stabiized in the filament's interior. The ATP-DnaA-oriC complex binds and stabilizes one strand of the AT-rich DNA unwinding element (DUE), permitting loading of DNA polymerase. After initiation quickly degrades to an ADP-DnaA complex that is not apt for DNA replication. Binds acidic phospholipids. This Paraburkholderia phymatum (strain DSM 17167 / CIP 108236 / LMG 21445 / STM815) (Burkholderia phymatum) protein is Chromosomal replication initiator protein DnaA.